The following is a 232-amino-acid chain: 7-cyano-7-deazaguanine synthase (232 aa).

ATP is bound at residue 8–18; the sequence is FSGGQDSTTCL. Residues cysteine 189, cysteine 198, cysteine 201, and cysteine 204 each coordinate Zn(2+).

It belongs to the QueC family. Requires Zn(2+) as cofactor.

The enzyme catalyses 7-carboxy-7-deazaguanine + NH4(+) + ATP = 7-cyano-7-deazaguanine + ADP + phosphate + H2O + H(+). It functions in the pathway purine metabolism; 7-cyano-7-deazaguanine biosynthesis. Catalyzes the ATP-dependent conversion of 7-carboxy-7-deazaguanine (CDG) to 7-cyano-7-deazaguanine (preQ(0)). This Photorhabdus laumondii subsp. laumondii (strain DSM 15139 / CIP 105565 / TT01) (Photorhabdus luminescens subsp. laumondii) protein is 7-cyano-7-deazaguanine synthase.